Consider the following 207-residue polypeptide: MKVKVQKIDGKAAGDVELDDAVFGVEPRADILHRVVTWQLENRRGTARPTRERSDVARTGAKFGRQKGSGNARHGDRGAPIFIGGGKAHGARKRDFNPSLNKKIRALGLKMALSSKAKDGLVVVDSLDLKDAKTKVLKGHFDKAGWNGKVLVIDGESVNEGFSKAAGNLPGVNVLPAMGANVYDILKHDTLVLTKDAVEKLEARFNG.

It belongs to the universal ribosomal protein uL4 family. In terms of assembly, part of the 50S ribosomal subunit.

One of the primary rRNA binding proteins, this protein initially binds near the 5'-end of the 23S rRNA. It is important during the early stages of 50S assembly. It makes multiple contacts with different domains of the 23S rRNA in the assembled 50S subunit and ribosome. Its function is as follows. Forms part of the polypeptide exit tunnel. The chain is Large ribosomal subunit protein uL4 from Erythrobacter litoralis (strain HTCC2594).